Consider the following 217-residue polypeptide: Small ribosomal subunit protein uS3 (217 aa).

One can recognise a KH type-2 domain in the interval 24–93 (IKEFLEYKLS…NPQIDVIDVS (70 aa)).

The protein belongs to the universal ribosomal protein uS3 family. Part of the 30S ribosomal subunit.

Its function is as follows. Binds the lower part of the 30S subunit head. This is Small ribosomal subunit protein uS3 from Pyrobaculum islandicum (strain DSM 4184 / JCM 9189 / GEO3).